A 181-amino-acid polypeptide reads, in one-letter code: uncharacterized protein (181 aa).

This is an uncharacterized protein from Acanthamoeba polyphaga (Amoeba).